A 550-amino-acid chain; its full sequence is Silent protein UshA(0) (550 aa).

Positions 1 to 25 (MKFLKRGVALALLAAFALTTQPAQA) are cleaved as a signal peptide. Residues Asp-41, His-43, Asp-84, Asn-116, His-217, His-252, and Gln-254 each coordinate a divalent metal cation. A disulfide bridge links Cys-258 with Cys-275. Substrate-binding positions include Phe-429 and 498–504 (FNATGGD).

It belongs to the 5'-nucleotidase family. A divalent metal cation is required as a cofactor.

Its subcellular location is the periplasm. The polypeptide is Silent protein UshA(0) (ushA) (Salmonella typhimurium (strain LT2 / SGSC1412 / ATCC 700720)).